A 163-amino-acid chain; its full sequence is SsrA-binding protein (163 aa).

Belongs to the SmpB family.

It localises to the cytoplasm. Required for rescue of stalled ribosomes mediated by trans-translation. Binds to transfer-messenger RNA (tmRNA), required for stable association of tmRNA with ribosomes. tmRNA and SmpB together mimic tRNA shape, replacing the anticodon stem-loop with SmpB. tmRNA is encoded by the ssrA gene; the 2 termini fold to resemble tRNA(Ala) and it encodes a 'tag peptide', a short internal open reading frame. During trans-translation Ala-aminoacylated tmRNA acts like a tRNA, entering the A-site of stalled ribosomes, displacing the stalled mRNA. The ribosome then switches to translate the ORF on the tmRNA; the nascent peptide is terminated with the 'tag peptide' encoded by the tmRNA and targeted for degradation. The ribosome is freed to recommence translation, which seems to be the essential function of trans-translation. The protein is SsrA-binding protein of Shewanella sp. (strain ANA-3).